The chain runs to 812 residues: Phospholipase D alpha 2 (812 aa).

The propeptide occupies 1–36 (MAQHLLHGTLHATIYEVDALHTGGLRSAGFLGKIIS). The region spanning 1–127 (MAQHLLHGTL…INGEEVEKWV (127 aa)) is the C2 domain. Positions 328-368 (AMFTHHQKIVVVDSEVPSQGGGSEMRRIMSFVGGIDLCDGR) constitute a PLD phosphodiesterase 1 domain. Residues H333, K335, and D340 contribute to the active site. H333 provides a ligand contact to a 1,2-diacyl-sn-glycero-3-phosphate. H374 lines the Ca(2+) pocket. A 1,2-diacyl-sn-glycero-3-phosphate is bound by residues Q524 and H663. The 28-residue stretch at 658 to 685 (FMIYVHSKMMIVDDEYIIVGSANINQRS) folds into the PLD phosphodiesterase 2 domain. Residues H663, K665, and D670 contribute to the active site. E724 is a Ca(2+) binding site.

Belongs to the phospholipase D family. C2-PLD subfamily. Ca(2+) is required as a cofactor.

The protein localises to the cytoplasm. It localises to the membrane. It catalyses the reaction a 1,2-diacyl-sn-glycero-3-phosphocholine + H2O = a 1,2-diacyl-sn-glycero-3-phosphate + choline + H(+). Hydrolyzes glycerol-phospholipids at the terminal phosphodiesteric bond. Plays an important role in various cellular processes, including phytohormone action, vesicular trafficking, secretion, cytoskeletal arrangement, meiosis, tumor promotion, pathogenesis, membrane deterioration and senescence. In Brassica oleracea var. capitata (Cabbage), this protein is Phospholipase D alpha 2 (PLD2).